We begin with the raw amino-acid sequence, 788 residues long: Cadherin-10 (788 aa).

Residues Met1–Pro22 form the signal peptide. Positions Glu23–Arg54 are excised as a propeptide. Topologically, residues Glu23 to Ala613 are extracellular. 5 consecutive Cadherin domains span residues Trp56 to Phe160, Pro161 to Phe269, Pro270 to Phe384, Ser385 to Phe489, and Phe489 to Leu603. An N-linked (GlcNAc...) asparagine glycan is attached at Asn256. Residues Asn456 and Asn534 are each glycosylated (N-linked (GlcNAc...) asparagine). The helical transmembrane segment at Leu614–Leu634 threads the bilayer. Residues Lys635 to Ala788 are Cytoplasmic-facing. Ser784 carries the phosphoserine modification.

It is found in the cell membrane. Functionally, cadherins are calcium-dependent cell adhesion proteins. They preferentially interact with themselves in a homophilic manner in connecting cells; cadherins may thus contribute to the sorting of heterogeneous cell types. The polypeptide is Cadherin-10 (Cdh10) (Mus musculus (Mouse)).